Here is a 97-residue protein sequence, read N- to C-terminus: Putative CC-type chemokine U83 (97 aa).

Cystine bridges form between Cys32/Cys62 and Cys33/Cys76.

Belongs to the intercrine beta (chemokine CC) family. Highly divergent.

The sequence is that of Putative CC-type chemokine U83 (U83) from Human herpesvirus 6A (strain Uganda-1102) (HHV-6 variant A).